The primary structure comprises 331 residues: Uroporphyrinogen decarboxylase (331 aa).

Substrate contacts are provided by residues 22–26 (RQAGR), Asp71, Tyr145, Ser199, and His308.

Belongs to the uroporphyrinogen decarboxylase family. Homodimer.

It is found in the cytoplasm. The enzyme catalyses uroporphyrinogen III + 4 H(+) = coproporphyrinogen III + 4 CO2. Its pathway is porphyrin-containing compound metabolism; protoporphyrin-IX biosynthesis; coproporphyrinogen-III from 5-aminolevulinate: step 4/4. Catalyzes the decarboxylation of four acetate groups of uroporphyrinogen-III to yield coproporphyrinogen-III. This is Uroporphyrinogen decarboxylase from Picrophilus torridus (strain ATCC 700027 / DSM 9790 / JCM 10055 / NBRC 100828 / KAW 2/3).